A 1551-amino-acid polypeptide reads, in one-letter code: ABC-type transporter phomO (1551 aa).

7 helical membrane-spanning segments follow: residues 34–54 (LYFEEVVFVLVPSCVFILLAA), 110–130 (CTAGLLVTLHVAGLILLCTTV), 139–159 (SVPASVVAALAFGVVPVLAHF), 172–192 (SSSLLVGLFLCVAVLLRAPLV), 202–222 (GSALVAVEIASLVLQLVLIAV), 314–334 (LGLYALAPVIPRLCLAGFTLA), and 358–378 (GLIGATFLIYTGIAVSTGWYW). Residues 326-599 (LCLAGFTLAQ…LLQIIPSFGA (274 aa)) form the ABC transmembrane type-1 1 domain. The N-linked (GlcNAc...) asparagine glycan is linked to Asn384. 4 helical membrane-spanning segments follow: residues 428–448 (LAYAHELWVAPIETAIGTWML), 452–472 (VGPPGLVVLGIIGVCLGASTY), 535–555 (LIVGTLLSSYSTATLAPVLVF), and 577–597 (LIWISLLASPLIQLLQIIPSF). Residues 645–861 (IHNSSFSYTD…VEDENGDVDN (217 aa)) form the ABC transporter 1 domain. Residue Asn647 is glycosylated (N-linked (GlcNAc...) asparagine). 678–685 (GPAGCGKS) provides a ligand contact to ATP. Asn721 carries N-linked (GlcNAc...) asparagine glycosylation. Residues 843-889 (YQFPPSQADVEDENGDVDNGAENTRPRESSHTTEAQSGPPEPKSKPT) form a disordered region. Transmembrane regions (helical) follow at residues 903–923 (SIGFLNLVLFIGGGIIFAFCL), 959–979 (VLPLIAVAGWVAQLMMLIVPL), 1027–1044 (LFNTAAALLTGIAQVILI), and 1137–1157 (LVLNLVVAGLALVVMGAAVGL). Residues 910–1199 (VLFIGGGIIF…LLTAWTSLET (290 aa)) form the ABC transmembrane type-1 2 domain. Residue Asn1179 is glycosylated (N-linked (GlcNAc...) asparagine). Basic and acidic residues predominate over residues 1219–1228 (DVLVRPDSLD). The disordered stretch occupies residues 1219–1296 (DVLVRPDSLD…HEATTITTTS (78 aa)). Residues 1259 to 1270 (YDDDDESDENTD) are compositionally biased toward acidic residues. In terms of domain architecture, ABC transporter 2 spans 1287-1535 (HEATTITTTS…SDIFAFFGRS (249 aa)). 1323–1330 (GRTGSGKS) is an ATP binding site. A glycan (N-linked (GlcNAc...) asparagine) is linked at Asn1486.

Belongs to the ABC transporter superfamily. ABCC family. Conjugate transporter (TC 3.A.1.208) subfamily.

The protein resides in the membrane. ABC-type transporter; part of the gene cluster that mediates the biosynthesis of the phomopsins, a group of hexapeptide mycotoxins which infects lupins and causes lupinosis disease in livestock. This chain is ABC-type transporter phomO, found in Diaporthe leptostromiformis (Lupinosis disease fungus).